The sequence spans 1149 residues: Protein deacetylase HDAC6 (1149 aa).

Positions 1–61 are disordered; sequence MTSTGQDSST…KGKMKKLSQP (61 aa). Over residues 18-29 the composition is skewed to polar residues; the sequence is NPQSPLQESSAT. Position 21 is a phosphoserine (S21). Omega-N-methylarginine is present on R32. A Phosphoserine modification is found at S43. A Nuclear export signal motif is present at residues 66 to 75; it reads LVVGLQGLDL. 2 histone deacetylase regions span residues 87–403 and 481–799; these read LVFD…TLLG and GLVY…SLLG. The 1 role is filled by H215. The 2 role is filled by H610. A disordered region spans residues 954 to 975; it reads ALGETEPTPPASHTNKQTTGAS. 4 positions are modified to phosphothreonine: T958, T961, T967, and T971. Over residues 964 to 975 the composition is skewed to polar residues; the sequence is ASHTNKQTTGAS. Phosphoserine is present on S975. The UBP-type zinc finger occupies 1045–1143; sequence SWCPHLMAVC…NAAHQNKFGE (99 aa). Zn(2+) is bound by residues C1047, H1049, C1067, C1070, C1079, C1082, and C1087. Positions 1088-1090 are ubiquitin binding; that stretch reads SRY. 5 residues coordinate Zn(2+): H1094, H1098, H1104, C1117, and C1120. Residues 1116-1123 form a ubiquitin binding region; that stretch reads WCYVCQAY. S1148 bears the Phosphoserine mark.

It belongs to the histone deacetylase family. HD type 2 subfamily. Forms a trimeric complex in the nucleus consisting of BANP, HDAC6 and KHDRBS1/SAM68; HDAC6 keeps KHDRBS1 in a deacetylated state which inhibits the inclusion of CD44 alternate exons. The complex is disrupted by MAPK1/MAPK3-mediated phosphorylation of BANP which results in BANP export to the cytoplasm. This facilitates acetylation of KHDRBS1 and CD44 variant exon inclusion. Interacts with SIRT2 (via both phosphorylated, unphosphorylated, active or inactive forms); the interaction is necessary for the complex to interact with alpha-tubulin. Under proteasome impairment conditions, interacts with UBD via its histone deacetylase 1 and UBP-type zinc-finger regions. Interacts with BBIP1, CBFA2T3, CYLD, DDIT3/CHOP, ZMYND15, F-actin and HDAC11. Interacts with RIPOR2; this interaction occurs during early myogenic differentiation and prevents HDAC6 to deacetylate tubulin. Interacts with AURKA; AURKA-mediated phosphorylation of HDAC6 promotes deacetylation of alpha-tubulin. Interacts with DYSF; this interaction occurs during early myogenic differentiation. Interacts with TPPP; inhibiting the tubulin deacetylase activity of HDAC6. Interacts with DYNLL1. Interacts with ATP13A2; the interaction results in recruitment of HDAC6 to lysosomes to promote CTTN deacetylation. Interacts with CCDC141 (via the N-terminal region); inhibiting the deacetylase activity of HDAC6. Interacts with IPO7; the interaction facilitates HDAC6 nuclear translocation in dental papilla cells. Requires Zn(2+) as cofactor. Phosphorylated by AURKA; phosphorylation increases HDAC6-mediated deacetylation of alpha-tubulin and subsequent disassembly of cilia. In terms of processing, ubiquitinated. Its polyubiquitination however does not lead to its degradation. Post-translationally, sumoylated in vitro. Expressed in neurons of the cortex. Expressed in Purkinje cells. Detected in keratinocytes (at protein level).

The protein localises to the cytoplasm. Its subcellular location is the cytoskeleton. It is found in the nucleus. The protein resides in the perikaryon. It localises to the cell projection. The protein localises to the dendrite. Its subcellular location is the axon. It is found in the cilium. The protein resides in the microtubule organizing center. It localises to the centrosome. The protein localises to the cilium basal body. It carries out the reaction N(6)-acetyl-L-lysyl-[protein] + H2O = L-lysyl-[protein] + acetate. The catalysed reaction is N(6)-acetyl-L-lysyl-[alpha-tubulin] + H2O = L-lysyl-[alpha-tubulin] + acetate. It participates in protein modification; protein ubiquitination. Deacetylates a wide range of non-histone substrates. Plays a central role in microtubule-dependent cell motility by mediating deacetylation of tubulin. Required for cilia disassembly via deacetylation of alpha-tubulin. Alpha-tubulin deacetylation results in destabilization of dynamic microtubules. Promotes deacetylation of CTTN, leading to actin polymerization, promotion of autophagosome-lysosome fusion and completion of autophagy. Deacetylates SQSTM1. Deacetylates peroxiredoxins PRDX1 and PRDX2, decreasing their reducing activity. Deacetylates antiviral protein RIGI in the presence of viral mRNAs which is required for viral RNA detection by RIGI. Sequentially deacetylates and polyubiquitinates DNA mismatch repair protein MSH2 which leads to MSH2 degradation, reducing cellular sensitivity to DNA-damaging agents and decreasing cellular DNA mismatch repair activities. Deacetylates DNA mismatch repair protein MLH1 which prevents recruitment of the MutL alpha complex (formed by the MLH1-PMS2 heterodimer) to the MutS alpha complex (formed by the MSH2-MSH6 heterodimer), leading to tolerance of DNA damage. Deacetylates RHOT1/MIRO1 which blocks mitochondrial transport and mediates axon growth inhibition. Deacetylates transcription factor SP1 which leads to increased expression of ENG, positively regulating angiogenesis. Deacetylates KHDRBS1/SAM68 which regulates alternative splicing by inhibiting the inclusion of CD44 alternate exons. Promotes odontoblast differentiation following IPO7-mediated nuclear import and subsequent repression of RUNX2 expression. In addition to its protein deacetylase activity, plays a key role in the degradation of misfolded proteins: when misfolded proteins are too abundant to be degraded by the chaperone refolding system and the ubiquitin-proteasome, mediates the transport of misfolded proteins to a cytoplasmic juxtanuclear structure called aggresome. Probably acts as an adapter that recognizes polyubiquitinated misfolded proteins and target them to the aggresome, facilitating their clearance by autophagy. The polypeptide is Protein deacetylase HDAC6 (Mus musculus (Mouse)).